Here is a 763-residue protein sequence, read N- to C-terminus: Phosphoglycerol transferase I (763 aa).

4 helical membrane-spanning segments follow: residues 1-21 (MSEL…AWKA), 26-46 (WWFA…ITLY), 77-97 (ILPG…LGWI), and 108-128 (FGYS…SPAF).

The protein belongs to the OpgB family.

It is found in the cell inner membrane. The catalysed reaction is a phosphatidylglycerol + a membrane-derived-oligosaccharide D-glucose = a 1,2-diacyl-sn-glycerol + a membrane-derived-oligosaccharide 6-(glycerophospho)-D-glucose.. It functions in the pathway glycan metabolism; osmoregulated periplasmic glucan (OPG) biosynthesis. Its function is as follows. Transfers a phosphoglycerol residue from phosphatidylglycerol to the membrane-bound nascent glucan backbones. The chain is Phosphoglycerol transferase I from Escherichia fergusonii (strain ATCC 35469 / DSM 13698 / CCUG 18766 / IAM 14443 / JCM 21226 / LMG 7866 / NBRC 102419 / NCTC 12128 / CDC 0568-73).